We begin with the raw amino-acid sequence, 161 residues long: PTS system glucose-specific EIIA component (161 aa).

A PTS EIIA type-1 domain is found at 31-135 (DPVFSKKIVG…SILTPVVISN (105 aa)). Residues His68 and His83 each coordinate Zn(2+). The active-site Tele-phosphohistidine intermediate; for EIIA activity is the His83. His83 bears the Phosphohistidine; by HPr mark.

Requires Zn(2+) as cofactor.

Its subcellular location is the cytoplasm. Its function is as follows. The phosphoenolpyruvate-dependent sugar phosphotransferase system (sugar PTS), a major carbohydrate active transport system, catalyzes the phosphorylation of incoming sugar substrates concomitantly with their translocation across the cell membrane. The enzyme II complex composed of PtsG and Crr is involved in glucose transport. This is PTS system glucose-specific EIIA component (crr) from Buchnera aphidicola subsp. Acyrthosiphon pisum (strain APS) (Acyrthosiphon pisum symbiotic bacterium).